Consider the following 201-residue polypeptide: Recombination protein RecR (201 aa).

The segment at 60-75 (CSVCGNVDTSDPCTIC) adopts a C4-type zinc-finger fold. In terms of domain architecture, Toprim spans 83-178 (ATLIVVEDVS…RVTKLAHGVP (96 aa)).

The protein belongs to the RecR family.

Its function is as follows. May play a role in DNA repair. It seems to be involved in an RecBC-independent recombinational process of DNA repair. It may act with RecF and RecO. The protein is Recombination protein RecR of Chelativorans sp. (strain BNC1).